Consider the following 66-residue polypeptide: 14-3-3-like protein 2 (66 aa).

Belongs to the 14-3-3 family.

This chain is 14-3-3-like protein 2, found in Pseudotsuga menziesii (Douglas-fir).